Consider the following 730-residue polypeptide: Heterogeneous nuclear ribonucleoprotein M (730 aa).

The segment covering Met1 to Ala13 has biased composition (low complexity). The tract at residues Met1–Glu62 is disordered. Ala2 is subject to N-acetylalanine. A Glycyl lysine isopeptide (Lys-Gly) (interchain with G-Cter in SUMO2) cross-link involves residue Lys17. The residue at position 29 (Ser29) is a Phosphoserine. Residue Lys37 forms a Glycyl lysine isopeptide (Lys-Gly) (interchain with G-Cter in SUMO2) linkage. A compositionally biased stretch (basic and acidic residues) spans Gly38–Lys50. Residues Lys69 and Lys83 each participate in a glycyl lysine isopeptide (Lys-Gly) (interchain with G-Cter in SUMO2) cross-link. 2 RRM domains span residues Tyr71–Asp149 and Ser204–Arg281. Ser86 bears the Phosphoserine mark. Glycyl lysine isopeptide (Lys-Gly) (interchain with G-Cter in SUMO2) cross-links involve residues Lys88 and Lys127. N6-acetyllysine; alternate is present on Lys134. Residue Lys134 forms a Glycyl lysine isopeptide (Lys-Gly) (interchain with G-Cter in SUMO2); alternate linkage. Glycyl lysine isopeptide (Lys-Gly) (interchain with G-Cter in SUMO2) cross-links involve residues Lys143 and Lys145. Residue Ser204 is modified to Phosphoserine. A Glycyl lysine isopeptide (Lys-Gly) (interchain with G-Cter in SUMO2) cross-link involves residue Lys221. Lys277 carries the N6-acetyllysine; alternate modification. Residue Lys277 forms a Glycyl lysine isopeptide (Lys-Gly) (interchain with G-Cter in SUMO2); alternate linkage. Residues Lys285 and Lys345 each participate in a glycyl lysine isopeptide (Lys-Gly) (interchain with G-Cter in SUMO2) cross-link. Phosphoserine is present on residues Ser365 and Ser377. Glycyl lysine isopeptide (Lys-Gly) (interchain with G-Cter in SUMO2) cross-links involve residues Lys381 and Lys388. Residue Ser397 is modified to Phosphoserine. Repeat copies occupy residues Gly400–Gly405, Gly407–Gly412, Gly415–Gly420, and Gly426–Gly431. The 27 X 6 AA repeats of [GEVSTPAN]-[ILMV]-[DE]-[RH]-[MLVI]-[GAV] stretch occupies residues Gly400–Gly608. The residue at position 432 (Ser432) is a Phosphoserine. Tandem repeats lie at residues Glu433 to Gly438, Val440 to Gly445, and Ser446 to Gly451. Residue Ser452 is modified to Phosphoserine. 4 repeat units span residues Gly453–Gly458, Gly461–Ala466, Ser468–Gly473, and Thr475–Gly480. Residue Ser468 is modified to Phosphoserine. Phosphoserine is present on Ser481. Tandem repeats lie at residues Gly482–Gly487, Gly493–Ala498, Pro500–Gly505, Thr507–Gly512, Gly514–Gly519, Ala521–Gly526, Ser528–Val533, Gly540–Gly545, Val547–Ala552, Gly554–Gly559, Asn562–Met566, Gly567–Gly572, Ser575–Met579, Gly580–Gly585, Ser588–Gly593, and Gly603–Gly608. Arg496 carries the post-translational modification Omega-N-methylarginine. Ser528 is subject to Phosphoserine. Ser575 bears the Phosphoserine mark. Residue Ser588 is modified to Phosphoserine. Residues Ser618, Ser633, and Ser637 each carry the phosphoserine modification. A Glycyl lysine isopeptide (Lys-Gly) (interchain with G-Cter in SUMO2) cross-link involves residue Lys651. An RRM 3 domain is found at Cys653–Asn729. The residue at position 665 (Thr665) is a Phosphothreonine. Residue Lys667 forms a Glycyl lysine isopeptide (Lys-Gly) (interchain with G-Cter in SUMO2) linkage. Residue Lys672 is modified to N6-acetyllysine. Residues Lys685 and Lys692 each participate in a glycyl lysine isopeptide (Lys-Gly) (interchain with G-Cter in SUMO2) cross-link. At Lys698 the chain carries N6-acetyllysine; alternate. Lys698 participates in a covalent cross-link: Glycyl lysine isopeptide (Lys-Gly) (interchain with G-Cter in SUMO2); alternate. A Glycyl lysine isopeptide (Lys-Gly) (interchain with G-Cter in SUMO1); alternate cross-link involves residue Lys698. Ser701 is subject to Phosphoserine. A Glycyl lysine isopeptide (Lys-Gly) (interchain with G-Cter in SUMO2) cross-link involves residue Lys716.

In terms of assembly, identified in the spliceosome C complex. Interacts with PPIA/CYPA. In terms of processing, sumoylated.

The protein resides in the nucleus. The protein localises to the nucleolus. In terms of biological role, pre-mRNA binding protein in vivo, binds avidly to poly(G) and poly(U) RNA homopolymers in vitro. Involved in splicing. Acts as a receptor for carcinoembryonic antigen in Kupffer cells, may initiate a series of signaling events leading to tyrosine phosphorylation of proteins and induction of IL-1 alpha, IL-6, IL-10 and tumor necrosis factor alpha cytokines. The polypeptide is Heterogeneous nuclear ribonucleoprotein M (HNRNPM) (Homo sapiens (Human)).